The primary structure comprises 294 residues: Cyclin-G1 (294 aa).

It belongs to the cyclin family. Cyclin G subfamily. In terms of assembly, binds to B' regulatory B subunits of protein phosphatase A (PP2A) following induction by p53 (in vitro). In terms of tissue distribution, highest levels in kidney, heart and skeletal muscle.

It is found in the nucleus. Its function is as follows. May play a role in growth regulation. Is associated with G2/M phase arrest in response to DNA damage. May be an intermediate by which p53 mediates its role as an inhibitor of cellular proliferation. In Mus musculus (Mouse), this protein is Cyclin-G1 (Ccng1).